Consider the following 572-residue polypeptide: Sulfite reductase [NADPH] hemoprotein beta-component (572 aa).

4 residues coordinate [4Fe-4S] cluster: C437, C443, C482, and C486. C486 is a siroheme binding site.

Belongs to the nitrite and sulfite reductase 4Fe-4S domain family. Alpha(8)-beta(8). The alpha component is a flavoprotein, the beta component is a hemoprotein. Siroheme serves as cofactor. It depends on [4Fe-4S] cluster as a cofactor.

It catalyses the reaction hydrogen sulfide + 3 NADP(+) + 3 H2O = sulfite + 3 NADPH + 4 H(+). It functions in the pathway sulfur metabolism; hydrogen sulfide biosynthesis; hydrogen sulfide from sulfite (NADPH route): step 1/1. Component of the sulfite reductase complex that catalyzes the 6-electron reduction of sulfite to sulfide. This is one of several activities required for the biosynthesis of L-cysteine from sulfate. In Staphylococcus epidermidis (strain ATCC 12228 / FDA PCI 1200), this protein is Sulfite reductase [NADPH] hemoprotein beta-component.